The primary structure comprises 122 residues: MGDSDLTAIRRKALRRGRISEYVAAVFLMLKGYRILALRHRTRLGEIDIIARKGDLAVFVEVKARHGEAAAVDAVSVAAQKRIRAASDLWLARQADQARLSQRYDIVAIMPGRLPRHFLDAF.

Belongs to the UPF0102 family.

The sequence is that of UPF0102 protein RL0336 from Rhizobium johnstonii (strain DSM 114642 / LMG 32736 / 3841) (Rhizobium leguminosarum bv. viciae).